Consider the following 540-residue polypeptide: CUB domain-containing protein 2 (540 aa).

The signal sequence occupies residues 1–24; that stretch reads MLAELGACLLLAMVLLDSDPGTQA. The Extracellular segment spans residues 25–516; it reads MEGVKCGGVL…GTMVTQDTSD (492 aa). Cystine bridges form between Cys-30–Cys-56, Cys-83–Cys-106, Cys-145–Cys-171, Cys-198–Cys-218, Cys-257–Cys-283, and Cys-314–Cys-336. 3 consecutive CUB domains span residues 30-143, 145-255, and 257-373; these read CGGV…YQKD, CGGV…YFSG, and CQEV…YIGV. Residue Asn-40 is glycosylated (N-linked (GlcNAc...) asparagine). An N-linked (GlcNAc...) asparagine glycan is attached at Asn-267. 3 N-linked (GlcNAc...) asparagine glycosylation sites follow: Asn-377, Asn-435, and Asn-436. Residues 517–537 traverse the membrane as a helical segment; the sequence is IVFLGLCILAGVLMIIAIVVL. The Cytoplasmic segment spans residues 538–540; sequence MLL.

The protein resides in the membrane. The polypeptide is CUB domain-containing protein 2 (Cdcp2) (Mus musculus (Mouse)).